A 397-amino-acid polypeptide reads, in one-letter code: Glutamyl-tRNA reductase (397 aa).

Residues 47–50, serine 98, 103–105, and glutamine 109 contribute to the substrate site; these read TCGR and ETD. Cysteine 48 serves as the catalytic Nucleophile. Residue 177–182 participates in NADP(+) binding; the sequence is GAGAVG.

It belongs to the glutamyl-tRNA reductase family. Homodimer.

The catalysed reaction is (S)-4-amino-5-oxopentanoate + tRNA(Glu) + NADP(+) = L-glutamyl-tRNA(Glu) + NADPH + H(+). Its pathway is porphyrin-containing compound metabolism; protoporphyrin-IX biosynthesis; 5-aminolevulinate from L-glutamyl-tRNA(Glu): step 1/2. Catalyzes the NADPH-dependent reduction of glutamyl-tRNA(Glu) to glutamate 1-semialdehyde (GSA). This Pyrobaculum aerophilum (strain ATCC 51768 / DSM 7523 / JCM 9630 / CIP 104966 / NBRC 100827 / IM2) protein is Glutamyl-tRNA reductase.